A 153-amino-acid chain; its full sequence is UPF0756 membrane protein BCB4264_A4705 (153 aa).

The next 4 helical transmembrane spans lie at 8 to 28, 54 to 74, 87 to 107, and 117 to 137; these read FLFI…TVAI, LGVT…EIGF, WIAL…VQLL, and LVFG…GPLI.

It belongs to the UPF0756 family.

It is found in the cell membrane. The sequence is that of UPF0756 membrane protein BCB4264_A4705 from Bacillus cereus (strain B4264).